Here is a 423-residue protein sequence, read N- to C-terminus: Imidazolonepropionase (423 aa).

Positions 78 and 80 each coordinate Fe(3+). The Zn(2+) site is built by H78 and H80. 4-imidazolone-5-propanoate contacts are provided by R87, Y150, and H183. Position 150 (Y150) interacts with N-formimidoyl-L-glutamate. H247 contacts Fe(3+). H247 contributes to the Zn(2+) binding site. A 4-imidazolone-5-propanoate-binding site is contributed by E250. D322 lines the Fe(3+) pocket. Residue D322 participates in Zn(2+) binding. N-formimidoyl-L-glutamate is bound by residues N324 and G326. Position 327 (S327) interacts with 4-imidazolone-5-propanoate.

This sequence belongs to the metallo-dependent hydrolases superfamily. HutI family. It depends on Zn(2+) as a cofactor. Fe(3+) serves as cofactor.

The protein resides in the cytoplasm. The catalysed reaction is 4-imidazolone-5-propanoate + H2O = N-formimidoyl-L-glutamate. It functions in the pathway amino-acid degradation; L-histidine degradation into L-glutamate; N-formimidoyl-L-glutamate from L-histidine: step 3/3. Its function is as follows. Catalyzes the hydrolytic cleavage of the carbon-nitrogen bond in imidazolone-5-propanoate to yield N-formimidoyl-L-glutamate. It is the third step in the universal histidine degradation pathway. The polypeptide is Imidazolonepropionase (Bacillus thuringiensis (strain Al Hakam)).